The chain runs to 71 residues: MGRKKESFENMLEKLETIVDSMDNGEITLEDSMKSYEEGIKLCNKLYKVLKDAEGKIKILEDNKEEDFESS.

It belongs to the XseB family. Heterooligomer composed of large and small subunits.

Its subcellular location is the cytoplasm. It carries out the reaction Exonucleolytic cleavage in either 5'- to 3'- or 3'- to 5'-direction to yield nucleoside 5'-phosphates.. Functionally, bidirectionally degrades single-stranded DNA into large acid-insoluble oligonucleotides, which are then degraded further into small acid-soluble oligonucleotides. This chain is Exodeoxyribonuclease 7 small subunit, found in Clostridium botulinum (strain Kyoto / Type A2).